We begin with the raw amino-acid sequence, 465 residues long: Asparagine--tRNA ligase (465 aa).

This sequence belongs to the class-II aminoacyl-tRNA synthetase family. Homodimer.

It localises to the cytoplasm. It catalyses the reaction tRNA(Asn) + L-asparagine + ATP = L-asparaginyl-tRNA(Asn) + AMP + diphosphate + H(+). The sequence is that of Asparagine--tRNA ligase from Pseudoalteromonas atlantica (strain T6c / ATCC BAA-1087).